Reading from the N-terminus, the 141-residue chain is 16 kDa protein (141 aa).

The tract at residues 100–119 is disordered; the sequence is TVKKSRNSKPSKKKFKERKE. The span at 102–115 shows a compositional bias: basic residues; sequence KKSRNSKPSKKKFK.

The polypeptide is 16 kDa protein (Tobacco rattle virus (strain PLB)).